Reading from the N-terminus, the 117-residue chain is Large ribosomal subunit protein uL18 (117 aa).

It belongs to the universal ribosomal protein uL18 family. In terms of assembly, part of the 50S ribosomal subunit; part of the 5S rRNA/L5/L18/L25 subcomplex. Contacts the 5S and 23S rRNAs.

Functionally, this is one of the proteins that bind and probably mediate the attachment of the 5S RNA into the large ribosomal subunit, where it forms part of the central protuberance. In Yersinia pseudotuberculosis serotype O:1b (strain IP 31758), this protein is Large ribosomal subunit protein uL18.